The primary structure comprises 430 residues: 4-hydroxy-3-methylbut-2-en-1-yl diphosphate synthase (flavodoxin) (430 aa).

[4Fe-4S] cluster-binding residues include Cys-310, Cys-313, Cys-356, and Glu-363.

It belongs to the IspG family. Requires [4Fe-4S] cluster as cofactor.

It carries out the reaction (2E)-4-hydroxy-3-methylbut-2-enyl diphosphate + oxidized [flavodoxin] + H2O + 2 H(+) = 2-C-methyl-D-erythritol 2,4-cyclic diphosphate + reduced [flavodoxin]. It participates in isoprenoid biosynthesis; isopentenyl diphosphate biosynthesis via DXP pathway; isopentenyl diphosphate from 1-deoxy-D-xylulose 5-phosphate: step 5/6. Converts 2C-methyl-D-erythritol 2,4-cyclodiphosphate (ME-2,4cPP) into 1-hydroxy-2-methyl-2-(E)-butenyl 4-diphosphate. The protein is 4-hydroxy-3-methylbut-2-en-1-yl diphosphate synthase (flavodoxin) of Nitrobacter winogradskyi (strain ATCC 25391 / DSM 10237 / CIP 104748 / NCIMB 11846 / Nb-255).